Reading from the N-terminus, the 734-residue chain is MDRNDDSAPVQAAAEPAEHPGDEKSGKRNVPPALKLVENVVATGEKSPAPASVYDLFKKYHKGEKNGEENVNVNVGFDQLSSDEKSGFLRKLQMLTVGSKKKDGESSQSPAGRLLKKFVPSRRTTPTASASTAKTTSPSRFSVFGRSAKKVSESFSSQKPIHRKQSARRLQFTEKENPQPDAARNKVVAAMTREYEKLSKECAPVPINNKPARVQMQIPRGSLETPTDSPVKSFSSTTTSSSPEKEREKEKEKIEQPRYGTTQRQSVNSQQSSASWHGELPPRDYTSPTFSRKIFVGGVPWDITEAALKDSFGEFGSCAVEWPGQEARYRSGQSNVMPPNANLRAHSKYSGQATTGYVYMIFEDERAVAALLHECSQEIGGAGEWYFKIRAQRSKSTEIRQVQIIPWVTSDSLYCHEESILEVGIEPKRTVFVGALHGMMTAQVLHSIMEDCFGCVECVQLDTDKFKYPIGSGRVTFREHGAYFKAIEIGYLHVHTSKFRKRVQIDPFLESTSCMVCNLEPAHCFCRNRNCFKYYCHSCWSIDHGKDTVVDVHVPVIVPSSATKAYQGHASRHSHLSSNSPSKARDGQNSNNSQFSQLLSPAFPMIVGAPTPTLSALYGYIQNNHTMSPTVYDGPLTPPSSETMSKRGSREFSSNSNGGPVFISPAPVLSSQKLETPIPSYFANSTAILTPTSTYYGSPSTQQTYYAPNVYYGYMPQPIPYDGYVCPPPANYTQ.

3 disordered regions span residues 1–31 (MDRN…RNVP), 98–185 (GSKK…AARN), and 220–283 (RGSL…LPPR). The segment covering 16-26 (PAEHPGDEKSG) has biased composition (basic and acidic residues). Composition is skewed to low complexity over residues 121 to 140 (SRRT…SPSR) and 232 to 242 (KSFSSTTTSSS). Basic and acidic residues predominate over residues 243 to 256 (PEKEREKEKEKIEQ). Over residues 259-275 (YGTTQRQSVNSQQSSAS) the composition is skewed to polar residues. The 23-residue stretch at 294-316 (IFVGGVPWDITEAALKDSFGEFG) folds into the RRM domain. Disordered regions lie at residues 564–593 (KAYQ…SNNS) and 630–657 (TVYD…SNSN). The segment covering 576–593 (LSSNSPSKARDGQNSNNS) has biased composition (low complexity).

Its function is as follows. Cytoplasmic polyadenylation element binding protein that binds to and regulates the translation of specific mRNAs. The protein is Cytoplasmic polyadenylation element-binding protein 3 (cpb-3) of Caenorhabditis japonica.